A 288-amino-acid chain; its full sequence is Oxaloacetate decarboxylase (288 aa).

Serine 47 contributes to the substrate binding site. A Mg(2+)-binding site is contributed by aspartate 85. Positions 156 and 232 each coordinate substrate.

The protein belongs to the isocitrate lyase/PEP mutase superfamily. Oxaloacetate decarboxylase family. In terms of assembly, homotetramer; dimer of dimers. Mg(2+) serves as cofactor.

The enzyme catalyses oxaloacetate + H(+) = pyruvate + CO2. Its function is as follows. Catalyzes the decarboxylation of oxaloacetate into pyruvate. Seems to play a role in maintaining cellular concentrations of bicarbonate and pyruvate. The chain is Oxaloacetate decarboxylase from Rhodopseudomonas palustris (strain ATCC BAA-98 / CGA009).